The primary structure comprises 164 residues: UPF0114 protein Spro_2386 (164 aa).

Transmembrane regions (helical) follow at residues 15-35 (LLAP…IKFF), 53-73 (LVLT…LVMV), and 136-156 (LMWY…MGYL).

The protein belongs to the UPF0114 family.

It is found in the cell membrane. This chain is UPF0114 protein Spro_2386, found in Serratia proteamaculans (strain 568).